A 71-amino-acid polypeptide reads, in one-letter code: Disintegrin horridistatin-2 (71 aa).

The 71-residue stretch at 1–71 (GEECDCGSPA…ADCPRNGLYG (71 aa)) folds into the Disintegrin domain. 6 disulfides stabilise this stretch: C4–C19, C6–C14, C13–C36, C27–C33, C32–C57, and C45–C64. A Cell attachment site motif is present at residues 49–51 (RGD).

This sequence belongs to the venom metalloproteinase (M12B) family. P-II subfamily. P-IIa sub-subfamily. Monomer (disintegrin). Expressed by the venom gland.

It localises to the secreted. Its function is as follows. Inhibits ADP-induced platelet aggregation (IC(50) is 16.2 nM) by binding to alpha-IIb/beta-3 (ITGA2B/ITGB3). This Crotalus horridus (Timber rattlesnake) protein is Disintegrin horridistatin-2.